The following is a 221-amino-acid chain: Small ribosomal subunit protein uS3 (221 aa).

The KH type-2 domain occupies 39–107; it reads LRKFLKDKLK…EVFLSIQEVR (69 aa).

This sequence belongs to the universal ribosomal protein uS3 family. Part of the 30S ribosomal subunit. Forms a tight complex with proteins S10 and S14.

Functionally, binds the lower part of the 30S subunit head. Binds mRNA in the 70S ribosome, positioning it for translation. This chain is Small ribosomal subunit protein uS3, found in Bdellovibrio bacteriovorus (strain ATCC 15356 / DSM 50701 / NCIMB 9529 / HD100).